A 274-amino-acid chain; its full sequence is MATYFVGDIQGCFDELHVLLAKVDFNPSKDELWVVGDMVARGTQSLETLRYLKGLEGSVKPVLGNHDLHLMALHGKVKRVNPKDNLGALLAAPDLNQLIDWLRLQPLAREHKAHSVLMAHAGIPPQWDVKTVLKESRKVQEALARDDYIEHLIAKMYTNSVSEWSPETKGLKRLVYTINALTRMRFLHSDGRLNFDCKLPPAKGEKEGLIPWFKQPGRAMKGHTLVFGHWAALMGEVNQPGLQALDTGCCWGQYLTLWHLESNQKITQNKLKKS.

The protein belongs to the Ap4A hydrolase family.

The enzyme catalyses P(1),P(4)-bis(5'-adenosyl) tetraphosphate + H2O = 2 ADP + 2 H(+). Functionally, hydrolyzes diadenosine 5',5'''-P1,P4-tetraphosphate to yield ADP. This chain is Bis(5'-nucleosyl)-tetraphosphatase, symmetrical, found in Shewanella loihica (strain ATCC BAA-1088 / PV-4).